A 290-amino-acid chain; its full sequence is Small ribosomal subunit biogenesis GTPase RsgA (290 aa).

Residues 62–213 (KNSLVRPPIV…IADTPGFSSL (152 aa)) form the CP-type G domain. Residues 111-114 (SKLD) and 156-164 (GQTGVGKST) contribute to the GTP site. Cysteine 237, cysteine 242, histidine 244, and cysteine 250 together coordinate Zn(2+).

This sequence belongs to the TRAFAC class YlqF/YawG GTPase family. RsgA subfamily. Monomer. Associates with 30S ribosomal subunit, binds 16S rRNA. The cofactor is Zn(2+).

The protein localises to the cytoplasm. One of several proteins that assist in the late maturation steps of the functional core of the 30S ribosomal subunit. Helps release RbfA from mature subunits. May play a role in the assembly of ribosomal proteins into the subunit. Circularly permuted GTPase that catalyzes slow GTP hydrolysis, GTPase activity is stimulated by the 30S ribosomal subunit. The chain is Small ribosomal subunit biogenesis GTPase RsgA from Streptococcus agalactiae serotype III (strain NEM316).